We begin with the raw amino-acid sequence, 334 residues long: Fructose-1,6-bisphosphatase class 1 (334 aa).

Glu87, Asp106, Leu108, and Asp109 together coordinate Mg(2+). Substrate contacts are provided by residues 109-112 (DGSS), Asn208, and Lys274. Position 280 (Glu280) interacts with Mg(2+).

This sequence belongs to the FBPase class 1 family. As to quaternary structure, homotetramer. The cofactor is Mg(2+).

Its subcellular location is the cytoplasm. The enzyme catalyses beta-D-fructose 1,6-bisphosphate + H2O = beta-D-fructose 6-phosphate + phosphate. Its pathway is carbohydrate biosynthesis; gluconeogenesis. The polypeptide is Fructose-1,6-bisphosphatase class 1 (Psychrobacter sp. (strain PRwf-1)).